The sequence spans 206 residues: MVHYKVSYFPIRGAGEIARQILAYAGQDFEDNRIPKEEWPAVKPSTPFGQLPLLEVDGKVLAQSHAIARYLARQFGINGKCAWEEAQVNSVADQFKDYLNEVRPYFMVKMGFAEGDLDALAKDVFLPGFKKHYGFFANFLKSAGSGYLVGDSLTFVDLLVAQHTADLLAANAALLDEFPQFKAHQEKVHSNANIKKWLETRPVTPF.

The GST N-terminal domain occupies 2–79; sequence VHYKVSYFPI…YLARQFGING (78 aa). Residues Tyr8, Trp39, Lys43, 49 to 51, and 63 to 64 each bind glutathione; these read GQL and QS. One can recognise a GST C-terminal domain in the interval 81-206; the sequence is CAWEEAQVNS…WLETRPVTPF (126 aa).

This sequence belongs to the GST superfamily. Sigma family.

It catalyses the reaction RX + glutathione = an S-substituted glutathione + a halide anion + H(+). Conjugation of reduced glutathione to a wide number of exogenous and endogenous hydrophobic electrophiles. May play a role in the detoxification of reactive oxygen species produced during pathogenic bacterial infection. This chain is Probable glutathione S-transferase 7 (gst-7), found in Caenorhabditis elegans.